Reading from the N-terminus, the 332-residue chain is Stage II sporulation protein B (332 aa).

Residues 1–10 (MKKRKNKKNS) show a composition bias toward basic residues. The disordered stretch occupies residues 1–71 (MKKRKNKKNS…EHPDEDEFNW (71 aa)). Basic and acidic residues predominate over residues 11-27 (KAAEKALKVTINGKEET). A helical transmembrane segment spans residues 112-132 (AATIAFAAVIGTGLGLFALNI). The interval 139–174 (SAPASLEDSLGSQTAKAGDTSADKQTSGAEKQAAQT) is disordered. Over residues 161 to 174 (DKQTSGAEKQAAQT) the composition is skewed to polar residues. Positions 175-250 (EGTYKTYAVQ…SDFEAWGGKE (76 aa)) constitute an SPOR domain.

Its subcellular location is the cell membrane. Appears to be degraded early in engulfment, in correlation with its loss from polar septa. Functionally, facilitates the rapid and spatially regulated dissolution of septal peptidoglycan. The protein is Stage II sporulation protein B of Bacillus subtilis (strain 168).